The following is a 58-amino-acid chain: ComX pheromone (58 aa).

Residues 1-52 (MKQDMIDYLMKNPQVLTKLENGEASLIGIPDKLIPSIVDIFNKKMTLSKKCK) constitute a propeptide that is removed on maturation. Tryptophan 56 carries the 3'-geranyl-2',N2-cyclotryptophan; in strain RO-E-2 /NRRL B-23055 lipid modification.

As to quaternary structure, interacts directly with the sensor histidine kinase ComP and stimulates its activity. Post-translationally, trp-56 is modified by geranylation, which is essential for activity. Modified by the tryptophan prenyltransferase ComQ before export to the extracellular environment. The type of isoprenyl derivative differs among the different pherotypes and depends on ComX primary sequence.

Its subcellular location is the secreted. In terms of biological role, part of a major quorum-sensing system that regulates the development of genetic competence. Acts through the activation of the two-component regulatory system ComP/ComA composed of a sensor histidine kinase, ComP, and a response regulator, ComA. This Bacillus spizizenii (Bacillus subtilis subsp. spizizenii) protein is ComX pheromone.